The following is a 355-amino-acid chain: S-adenosylmethionine:tRNA ribosyltransferase-isomerase (355 aa).

This sequence belongs to the QueA family. As to quaternary structure, monomer.

It localises to the cytoplasm. The catalysed reaction is 7-aminomethyl-7-carbaguanosine(34) in tRNA + S-adenosyl-L-methionine = epoxyqueuosine(34) in tRNA + adenine + L-methionine + 2 H(+). The protein operates within tRNA modification; tRNA-queuosine biosynthesis. In terms of biological role, transfers and isomerizes the ribose moiety from AdoMet to the 7-aminomethyl group of 7-deazaguanine (preQ1-tRNA) to give epoxyqueuosine (oQ-tRNA). The chain is S-adenosylmethionine:tRNA ribosyltransferase-isomerase from Pectobacterium carotovorum subsp. carotovorum (strain PC1).